The chain runs to 421 residues: Outer capsid protein P8 (421 aa).

This sequence belongs to the phytoreovirus outer capsid protein P8 family. In terms of assembly, homotrimer. Homomultimer. Interacts with host peroxisomal glycolate oxidase (GOX). This interaction mediates its relocation to virus factories peripheral to host peroxisomes.

It localises to the virion. Its subcellular location is the host cytoplasm. In terms of biological role, capsid protein which self-assembles to form the outer icosahedral capsid with a T=13 symmetry, about 70 nm in diameter and consisting of 780 molecules capsid proteins. The chain is Outer capsid protein P8 (S8) from Rice dwarf virus (isolate S) (RDV).